A 164-amino-acid chain; its full sequence is MVNSVVFFDITVDGKPLGRISIKLFADKIPKTAENFRALSTGEKGFRYKGSCFHRIIPGFMCQGGDFTRPNGTGDKSIYGEKFDDENLIRKHTGSGILSMANAGPNTNGSQFFICTAKTEWLDGKHVAFGKVKERVNIVEAMEHFGYRNSKTSKKITIADCGQF.

In terms of domain architecture, PPIase cyclophilin-type spans 7–163; that stretch reads FFDITVDGKP…KKITIADCGQ (157 aa).

This sequence belongs to the cyclophilin-type PPIase family. PPIase A subfamily.

The protein localises to the cytoplasm. It catalyses the reaction [protein]-peptidylproline (omega=180) = [protein]-peptidylproline (omega=0). In terms of biological role, PPIases accelerate the folding of proteins. It catalyzes the cis-trans isomerization of proline imidic peptide bonds in oligopeptides. The polypeptide is Peptidyl-prolyl cis-trans isomerase A-like 4C (Homo sapiens (Human)).